The following is a 360-amino-acid chain: Probable ribonucleoside-diphosphate reductase small subunit 376L (360 aa).

3 residues coordinate Fe cation: Asp67, Glu98, and His101. The active site involves Tyr105. Residues Glu172, Glu206, and His209 each contribute to the Fe cation site.

This sequence belongs to the ribonucleoside diphosphate reductase small chain family. Heterotetramer composed of a homodimer of the large subunit (R1) and a homodimer of the small subunit (R2). Larger multisubunit protein complex are also active, composed of (R1)n(R2)n. Requires Fe cation as cofactor.

It catalyses the reaction a 2'-deoxyribonucleoside 5'-diphosphate + [thioredoxin]-disulfide + H2O = a ribonucleoside 5'-diphosphate + [thioredoxin]-dithiol. In terms of biological role, ribonucleoside-diphosphate reductase holoenzyme provides the precursors necessary for viral DNA synthesis. Allows virus growth in non-dividing cells. Catalyzes the biosynthesis of deoxyribonucleotides from the corresponding ribonucleotides. The protein is Probable ribonucleoside-diphosphate reductase small subunit 376L of Acheta domesticus (House cricket).